The chain runs to 335 residues: Mycobacterial beta-ketoacyl-[acyl-carrier-protein] synthase III (335 aa).

Residues Cys122 and His258 contribute to the active site. Residues 259–263 (QANSR) are ACP-binding. Residue Asn289 is part of the active site.

It belongs to the thiolase-like superfamily. FabH family. As to quaternary structure, homodimer.

The protein resides in the cytoplasm. It carries out the reaction malonyl-[ACP] + dodecanoyl-CoA + H(+) = 3-oxotetradecanoyl-[ACP] + CO2 + CoA. Its pathway is lipid metabolism; fatty acid biosynthesis. It participates in lipid metabolism; mycolic acid biosynthesis. Its function is as follows. Catalyzes the condensation reaction of fatty acid synthesis by the addition to an acyl acceptor of two carbons from malonyl-ACP. Catalyzes the first condensation reaction which initiates fatty acid synthesis and may therefore play a role in governing the total rate of fatty acid production. Possesses both acetoacetyl-ACP synthase and acetyl transacylase activities. Its substrate specificity determines the biosynthesis of branched-chain and/or straight-chain of fatty acids. This is Mycobacterial beta-ketoacyl-[acyl-carrier-protein] synthase III from Mycobacterium marinum (strain ATCC BAA-535 / M).